The chain runs to 162 residues: Large ribosomal subunit protein uL30 (162 aa).

This sequence belongs to the universal ribosomal protein uL30 family. Part of the 50S ribosomal subunit.

The sequence is that of Large ribosomal subunit protein uL30 from Staphylothermus marinus (strain ATCC 43588 / DSM 3639 / JCM 9404 / F1).